The following is a 714-amino-acid chain: Fatty acid oxidation complex subunit alpha (714 aa).

The interval 1-190 (MEMASAFTLN…KLGLVDDVVP (190 aa)) is enoyl-CoA hydratase. The tract at residues 306–714 (APLNSVGILG…FWKTTATDLQ (409 aa)) is 3-hydroxyacyl-CoA dehydrogenase.

It in the N-terminal section; belongs to the enoyl-CoA hydratase/isomerase family. This sequence in the central section; belongs to the 3-hydroxyacyl-CoA dehydrogenase family. Heterotetramer of two alpha chains (FadJ) and two beta chains (FadI).

It localises to the cytoplasm. It carries out the reaction a (3S)-3-hydroxyacyl-CoA = a (2E)-enoyl-CoA + H2O. The enzyme catalyses a 4-saturated-(3S)-3-hydroxyacyl-CoA = a (3E)-enoyl-CoA + H2O. The catalysed reaction is a (3S)-3-hydroxyacyl-CoA + NAD(+) = a 3-oxoacyl-CoA + NADH + H(+). It catalyses the reaction (3S)-3-hydroxybutanoyl-CoA = (3R)-3-hydroxybutanoyl-CoA. It participates in lipid metabolism; fatty acid beta-oxidation. In terms of biological role, catalyzes the formation of a hydroxyacyl-CoA by addition of water on enoyl-CoA. Also exhibits 3-hydroxyacyl-CoA epimerase and 3-hydroxyacyl-CoA dehydrogenase activities. This is Fatty acid oxidation complex subunit alpha from Escherichia coli O6:K15:H31 (strain 536 / UPEC).